Consider the following 220-residue polypeptide: Small ribosomal subunit protein eS8 (220 aa).

It belongs to the eukaryotic ribosomal protein eS8 family.

This chain is Small ribosomal subunit protein eS8 (RPS8A), found in Leishmania major.